We begin with the raw amino-acid sequence, 425 residues long: Histone-binding protein RBBP4 (425 aa).

Residue alanine 2 is modified to N-acetylalanine. Lysine 4 carries the N6-acetyllysine; alternate modification. Lysine 4 participates in a covalent cross-link: Glycyl lysine isopeptide (Lys-Gly) (interchain with G-Cter in SUMO2); alternate. Residue lysine 4 forms a Glycyl lysine isopeptide (Lys-Gly) (interchain with G-Cter in ubiquitin); alternate linkage. WD repeat units lie at residues 32 to 125 (YDLV…NHEG), 126 to 175 (EVNR…RLRG), 176 to 223 (HQKE…KTIF), 225 to 270 (GHTA…HSVD), 271 to 314 (AHTA…HSFE), 315 to 371 (SHKD…FIHG), and 372 to 404 (GHTAKISDFSWNPNEPWVICSVSEDNIMQVWQM). Position 110 is a phosphoserine (serine 110). Lysine 160 carries the post-translational modification N6-acetyllysine; alternate. Lysine 160 participates in a covalent cross-link: Glycyl lysine isopeptide (Lys-Gly) (interchain with G-Cter in SUMO2); alternate. Serine 355 bears the Phosphoserine mark.

It belongs to the WD repeat RBAP46/RBAP48/MSI1 family. As to quaternary structure, binds directly to helix 1 of the histone fold of histone H4, a region that is not accessible when H4 is in chromatin. Subunit of the chromatin assembly factor 1 (CAF-1) complex, which is composed of RBBP4, CHAF1B and CHAF1A. Subunit of the core histone deacetylase (HDAC) complex, which is composed of HDAC1, HDAC2, RBBP4 and RBBP7. The core HDAC complex associates with SIN3A, ARID4B/SAP180, SAP18, SAP30, SAP130, SUDS3/SAP45 and possibly ARID4A/RBP1 and ING1 to form the SIN3 HDAC complex. Component of the nucleosome remodeling and deacetylase (NuRD) repressor complex, composed of core proteins MTA1, MTA2, MTA3, RBBP4, RBBP7, HDAC1, HDAC2, MBD2, MBD3, and peripherally associated proteins CDK2AP1, CDK2AP2, GATAD2A, GATAD2B, CHD3, CHD4 and CHD5. The exact stoichiometry of the NuRD complex is unknown, and some subunits such as MBD2 and MBD3, GATAD2A and GATAD2B, and CHD3, CHD4 and CHD5 define mutually exclusive NuRD complexes. Interacts with ZNF512B; the interaction is direct and may play a role in repressing gene expression. The NuRD complex may also interact with MBD3L1 and MBD3L2. Component of the PRC2 complex, which consists of the core subunits EED, EZH1 or EZH2, SUZ12, and RBBP4, and various combinations of accessory subunits including AEBP2, JARID2, PHF19, MTF2 and EPOP. Forms a monomeric PRC2.2 (class 2) complex consisting of at least SUZ12, RBBP4, AEBP2 and JARID2. Forms a dimeric PRC2.1 (class 1, PRC-PCL) complex consisting of at least SUZ12, RBBP4, and PHF19; PHF19 stabilizes the dimeric structure which enhances PRC2 interaction with chromatin. Component of the NURF-1 ISWI chromatin remodeling complex (also called the nucleosome-remodeling factor (NURF) complex) at least composed of SMARCA1 (isoform 2), BPTF, RBBP4 and RBBP7. Within the complex interacts with isoform 2 of SMARCA1. Component of the BPFT-SMARCA1 complex at least composed of SMARCA1 (isoform 1), BPFT, RBBP4 and RBBP7; the complex is catalytically inactive and does not remodel chromatin. Within the complex interacts with isoform 1 of SMARCA1. Interacts with the ISWI chromatin remodeling complex component SMARCA5; the interaction is direct. Interacts with the viral protein-binding domain of the retinoblastoma protein (RB1). Component of the DREAM complex (also named LINC complex) at least composed of E2F4, E2F5, LIN9, LIN37, LIN52, LIN54, MYBL1, MYBL2, RBL1, RBL2, RBBP4, TFDP1 and TFDP2. The complex exists in quiescent cells where it represses cell cycle-dependent genes. It dissociates in S phase when LIN9, LIN37, LIN52 and LIN54 form a subcomplex that binds to MYBL2. Found in a complex composed of at least SINHCAF, SIN3A, HDAC1, SAP30, RBBP4, OGT and TET1. Interacts with ZNF827; the interaction is direct and recruits RBBP4 to telomeres. Interacts with MTA1; the interaction is direct and mutually exclusive with binding histone H4. Interacts with ARMC12 (via ARM domains). Interacts with BRCA1. Interacts with CDK2AP1. Interacts with CREBBP, and this interaction may be enhanced by the binding of phosphorylated CREB1 to CREBBP. Interacts with ERCC6. Interacts with HDAC7. Interacts with PHF6. Interacts with PWWP2B. Interacts with SPEN/MINT. Interacts with SUV39H1.

The protein localises to the nucleus. It is found in the chromosome. Its subcellular location is the telomere. Core histone-binding subunit that may target chromatin assembly factors, chromatin remodeling factors and histone deacetylases to their histone substrates in a manner that is regulated by nucleosomal DNA. Component of the chromatin assembly factor 1 (CAF-1) complex, which is required for chromatin assembly following DNA replication and DNA repair. Component of the core histone deacetylase (HDAC) complex, which promotes histone deacetylation and consequent transcriptional repression. Component of the nucleosome remodeling and histone deacetylase complex (the NuRD complex), which promotes transcriptional repression by histone deacetylation and nucleosome remodeling. Component of the PRC2 complex, which promotes repression of homeotic genes during development. Component of the NURF (nucleosome remodeling factor) complex. This Pongo abelii (Sumatran orangutan) protein is Histone-binding protein RBBP4 (RBBP4).